A 427-amino-acid chain; its full sequence is 3-phosphoshikimate 1-carboxyvinyltransferase (427 aa).

Residues K20, S21, and R25 each coordinate 3-phosphoshikimate. K20 is a binding site for phosphoenolpyruvate. Phosphoenolpyruvate is bound by residues G92 and R120. Residues S166, Q168, D312, and K339 each coordinate 3-phosphoshikimate. Q168 contacts phosphoenolpyruvate. The Proton acceptor role is filled by D312. Residues R343 and R385 each coordinate phosphoenolpyruvate.

The protein belongs to the EPSP synthase family. As to quaternary structure, monomer.

The protein localises to the cytoplasm. The catalysed reaction is 3-phosphoshikimate + phosphoenolpyruvate = 5-O-(1-carboxyvinyl)-3-phosphoshikimate + phosphate. The protein operates within metabolic intermediate biosynthesis; chorismate biosynthesis; chorismate from D-erythrose 4-phosphate and phosphoenolpyruvate: step 6/7. In terms of biological role, catalyzes the transfer of the enolpyruvyl moiety of phosphoenolpyruvate (PEP) to the 5-hydroxyl of shikimate-3-phosphate (S3P) to produce enolpyruvyl shikimate-3-phosphate and inorganic phosphate. The sequence is that of 3-phosphoshikimate 1-carboxyvinyltransferase from Streptococcus agalactiae serotype Ia (strain ATCC 27591 / A909 / CDC SS700).